Consider the following 363-residue polypeptide: MSGNTFGKLFTVTTAGESHGPALVAIVDGCPPGLELDLQDLQRDLDRRKPGTSRHTTQRQEADEVEILSGVFEGKTTGASIGLLIRNTDQKSKDYSAIKDLFRPAHADYTYHHKYGIRDYRGGGRSSARETAMRVAAGAIAKKYLATQGIVIRGYMSQLGPIQIPFKTWDSVEDNAFFCPDPDKVPELEAYMDQLRRDQDSVGAKITVVAEGVMPGLGEPIFDRLDAELAHALMNINAVKGVEIGAGFDCVAQRGTEHRDEMTPLGFLSNQAGGILGGISSGQPIIAHLALKPTSSITTPGRSIDTDGNAADVITKGRHDPCVGIRATPIAEAMMAIVLLDHLLRHRGQNADVSVNTPVLGQL.

Residues arginine 48 and arginine 54 each contribute to the NADP(+) site. FMN contacts are provided by residues 125–127, 237–238, glycine 277, 292–296, and arginine 318; these read RSS, NA, and KPTSS.

Belongs to the chorismate synthase family. As to quaternary structure, homotetramer. Requires FMNH2 as cofactor.

It carries out the reaction 5-O-(1-carboxyvinyl)-3-phosphoshikimate = chorismate + phosphate. It participates in metabolic intermediate biosynthesis; chorismate biosynthesis; chorismate from D-erythrose 4-phosphate and phosphoenolpyruvate: step 7/7. In terms of biological role, catalyzes the anti-1,4-elimination of the C-3 phosphate and the C-6 proR hydrogen from 5-enolpyruvylshikimate-3-phosphate (EPSP) to yield chorismate, which is the branch point compound that serves as the starting substrate for the three terminal pathways of aromatic amino acid biosynthesis. This reaction introduces a second double bond into the aromatic ring system. In Pseudomonas savastanoi pv. phaseolicola (strain 1448A / Race 6) (Pseudomonas syringae pv. phaseolicola (strain 1448A / Race 6)), this protein is Chorismate synthase.